The chain runs to 278 residues: Small ribosomal subunit protein uS2 (278 aa).

A disordered region spans residues 233–257 (IDMEAAGEAPANKGKKKSVKARLDK).

Belongs to the universal ribosomal protein uS2 family.

This is Small ribosomal subunit protein uS2 from Bacteroides thetaiotaomicron (strain ATCC 29148 / DSM 2079 / JCM 5827 / CCUG 10774 / NCTC 10582 / VPI-5482 / E50).